A 367-amino-acid polypeptide reads, in one-letter code: Uroporphyrinogen decarboxylase (367 aa).

Met1 carries the post-translational modification N-acetylmethionine. The coproporphyrinogen I site is built by Arg37, Ala39, Arg41, Arg50, Asp86, Tyr164, Ser219, and His339. Coproporphyrinogen III contacts are provided by Arg37, Ala39, and Arg41. Coproporphyrinogen III contacts are provided by Asp86, Tyr164, Ser219, and His339.

Belongs to the uroporphyrinogen decarboxylase family. In terms of assembly, homodimer.

The protein resides in the cytoplasm. Its subcellular location is the cytosol. The enzyme catalyses uroporphyrinogen III + 4 H(+) = coproporphyrinogen III + 4 CO2. It catalyses the reaction uroporphyrinogen I + 4 H(+) = coproporphyrinogen I + 4 CO2. It functions in the pathway porphyrin-containing compound metabolism; protoporphyrin-IX biosynthesis; coproporphyrinogen-III from 5-aminolevulinate: step 4/4. Catalyzes the sequential decarboxylation of the four acetate side chains of uroporphyrinogen to form coproporphyrinogen and participates in the fifth step in the heme biosynthetic pathway. Isomer I or isomer III of uroporphyrinogen may serve as substrate, but only coproporphyrinogen III can ultimately be converted to heme. In vitro also decarboxylates pentacarboxylate porphyrinogen I. The chain is Uroporphyrinogen decarboxylase from Pongo abelii (Sumatran orangutan).